Consider the following 445-residue polypeptide: Tryptophan 5-hydroxylase 1 (445 aa).

The ACT domain maps to 19 to 94; the sequence is AIIFSLKNEV…SIVSMNPTEH (76 aa). At Ser58 the chain carries Phosphoserine; by PKA. L-tryptophan contacts are provided by Tyr236, Arg258, and Thr266. Fe cation is bound by residues His273, His278, and Glu318. L-tryptophan-binding residues include Ser337 and Ile367.

This sequence belongs to the biopterin-dependent aromatic amino acid hydroxylase family. As to quaternary structure, homotetramer. Fe(2+) serves as cofactor.

The catalysed reaction is (6R)-L-erythro-5,6,7,8-tetrahydrobiopterin + L-tryptophan + O2 = 5-hydroxy-L-tryptophan + (4aS,6R)-4a-hydroxy-L-erythro-5,6,7,8-tetrahydrobiopterin. It participates in aromatic compound metabolism; serotonin biosynthesis; serotonin from L-tryptophan: step 1/2. In terms of biological role, oxidizes L-tryptophan to 5-hydroxy-l-tryptophan in the rate-determining step of serotonin biosynthesis. The protein is Tryptophan 5-hydroxylase 1 (TPH1) of Gallus gallus (Chicken).